The chain runs to 261 residues: Putative hydro-lyase Sfum_3393 (261 aa).

Belongs to the D-glutamate cyclase family.

This is Putative hydro-lyase Sfum_3393 from Syntrophobacter fumaroxidans (strain DSM 10017 / MPOB).